Consider the following 286-residue polypeptide: Acetyl-coenzyme A carboxylase carboxyl transferase subunit beta (286 aa).

The CoA carboxyltransferase N-terminal domain maps to 28–286 (LMQKCSNCKK…KMHMDGRQLK (259 aa)). Zn(2+) is bound by residues Cys32, Cys35, Cys51, and Cys54. The C4-type zinc-finger motif lies at 32 to 54 (CSNCKKIYYRKEMVKALQVCPNC).

The protein belongs to the AccD/PCCB family. In terms of assembly, acetyl-CoA carboxylase is a heterohexamer composed of biotin carboxyl carrier protein (AccB), biotin carboxylase (AccC) and two subunits each of ACCase subunit alpha (AccA) and ACCase subunit beta (AccD). Requires Zn(2+) as cofactor.

It localises to the cytoplasm. The catalysed reaction is N(6)-carboxybiotinyl-L-lysyl-[protein] + acetyl-CoA = N(6)-biotinyl-L-lysyl-[protein] + malonyl-CoA. It participates in lipid metabolism; malonyl-CoA biosynthesis; malonyl-CoA from acetyl-CoA: step 1/1. Component of the acetyl coenzyme A carboxylase (ACC) complex. Biotin carboxylase (BC) catalyzes the carboxylation of biotin on its carrier protein (BCCP) and then the CO(2) group is transferred by the transcarboxylase to acetyl-CoA to form malonyl-CoA. The chain is Acetyl-coenzyme A carboxylase carboxyl transferase subunit beta from Oceanobacillus iheyensis (strain DSM 14371 / CIP 107618 / JCM 11309 / KCTC 3954 / HTE831).